The chain runs to 61 residues: Sperm protamine P1 (61 aa).

The segment at Met1–Asn61 is disordered.

It belongs to the protamine P1 family. Testis.

Its subcellular location is the nucleus. It localises to the chromosome. Its function is as follows. Protamines substitute for histones in the chromatin of sperm during the haploid phase of spermatogenesis. They compact sperm DNA into a highly condensed, stable and inactive complex. In Ornithorhynchus anatinus (Duckbill platypus), this protein is Sperm protamine P1 (PRM1).